Reading from the N-terminus, the 309-residue chain is Glutaminase (309 aa).

7 residues coordinate substrate: Ser-64, Asn-114, Glu-160, Asn-167, Tyr-191, Tyr-243, and Val-261.

It belongs to the glutaminase family. Homotetramer.

It catalyses the reaction L-glutamine + H2O = L-glutamate + NH4(+). The protein is Glutaminase of Rhodopseudomonas palustris (strain BisB18).